The chain runs to 390 residues: Pyruvate dehydrogenase E1 component subunit alpha, somatic form, mitochondrial (390 aa).

The transit peptide at 1-29 (MRKMLAAVSRVLAGAAQKPASRVLVASRN) directs the protein to the mitochondrion. An N6-acetyllysine; alternate modification is found at lysine 63. Residue lysine 63 is modified to N6-succinyllysine; alternate. Positions 92, 118, 119, 157, 165, 167, 196, 197, 198, 225, and 227 each coordinate pyruvate. Residues tyrosine 118 and arginine 119 each coordinate thiamine diphosphate. 6 residues coordinate thiamine diphosphate: glycine 165, valine 167, aspartate 196, glycine 197, alanine 198, and asparagine 225. Aspartate 196 provides a ligand contact to Mg(2+). Asparagine 225 and tyrosine 227 together coordinate Mg(2+). At serine 232 the chain carries Phosphoserine; by PDK1. At lysine 244 the chain carries N6-acetyllysine; alternate. At lysine 244 the chain carries N6-succinyllysine; alternate. An N6-acetyllysine modification is found at lysine 267. At lysine 277 the chain carries N6-succinyllysine. Histidine 292 serves as a coordination point for thiamine diphosphate. Serine 293 is subject to Phosphoserine; by PDK1, PDK2, PDK3 and PDK4. Serine 295 is subject to Phosphoserine. A Phosphoserine; by PDK1, PDK2, PDK3 and PDK4 modification is found at serine 300. Residue tyrosine 301 is modified to Phosphotyrosine. Lysine 313 bears the N6-acetyllysine; alternate mark. N6-succinyllysine; alternate is present on lysine 313. N6-acetyllysine occurs at positions 321 and 336. Lysine 385 carries the N6-succinyllysine modification.

Heterotetramer of two PDHA1 and two PDHB subunits. The heterotetramer interacts with DLAT, and is part of the multimeric pyruvate dehydrogenase complex that contains multiple copies of pyruvate dehydrogenase (E1), dihydrolipoamide acetyltransferase (DLAT, E2) and lipoamide dehydrogenase (DLD, E3). These subunits are bound to an inner core composed of about 48 DLAT and 12 PDHX molecules. Requires thiamine diphosphate as cofactor. Mg(2+) serves as cofactor. In terms of processing, phosphorylation at Ser-232, Ser-293 and Ser-300 by PDK family kinases inactivates the enzyme; for this phosphorylation at a single site is sufficient. Phosphorylation at Ser-293 interferes with access to active site, and thereby inactivates the enzyme. Dephosphorylation at all three sites, i.e. at Ser-232, Ser-293 and Ser-300, is required for reactivation. Post-translationally, acetylation alters the phosphorylation pattern. Deacetylated by SIRT3. In terms of tissue distribution, in all tissues, but in very low amount in testis.

The protein localises to the mitochondrion matrix. The catalysed reaction is N(6)-[(R)-lipoyl]-L-lysyl-[protein] + pyruvate + H(+) = N(6)-[(R)-S(8)-acetyldihydrolipoyl]-L-lysyl-[protein] + CO2. Its activity is regulated as follows. Pyruvate dehydrogenase activity is inhibited by phosphorylation of PDHA1; it is reactivated by dephosphorylation. Its function is as follows. The pyruvate dehydrogenase complex catalyzes the overall conversion of pyruvate to acetyl-CoA and CO(2), and thereby links the glycolytic pathway to the tricarboxylic cycle. The chain is Pyruvate dehydrogenase E1 component subunit alpha, somatic form, mitochondrial (Pdha1) from Rattus norvegicus (Rat).